A 131-amino-acid polypeptide reads, in one-letter code: Global transcriptional regulator Spx (131 aa).

Cysteine 10 and cysteine 13 are oxidised to a cystine.

It belongs to the ArsC family. Spx subfamily. As to quaternary structure, interacts with the C-terminal domain of the alpha subunit of the RNAP.

The protein resides in the cytoplasm. Functionally, global transcriptional regulator that plays a key role in stress response and exerts either positive or negative regulation of genes. Acts by interacting with the C-terminal domain of the alpha subunit of the RNA polymerase (RNAP). This interaction can enhance binding of RNAP to the promoter region of target genes and stimulate their transcription, or block interaction of RNAP with activator. The sequence is that of Global transcriptional regulator Spx from Shouchella clausii (strain KSM-K16) (Alkalihalobacillus clausii).